We begin with the raw amino-acid sequence, 422 residues long: Adenylosuccinate synthetase (422 aa).

GTP-binding positions include 11-17 (GDEGKGK) and 39-41 (GHT). Asp-12 serves as the catalytic Proton acceptor. Residues Asp-12 and Gly-39 each coordinate Mg(2+). IMP contacts are provided by residues 12-15 (DEGK), 37-40 (NAGH), Thr-129, Arg-143, Asn-219, Thr-234, and Arg-298. The active-site Proton donor is the His-40. Position 294–300 (294–300 (VTTGRRR)) interacts with substrate. GTP is bound by residues Arg-300, 326 to 328 (KLD), and 409 to 411 (GTG).

The protein belongs to the adenylosuccinate synthetase family. Homodimer. Mg(2+) is required as a cofactor.

Its subcellular location is the cytoplasm. It carries out the reaction IMP + L-aspartate + GTP = N(6)-(1,2-dicarboxyethyl)-AMP + GDP + phosphate + 2 H(+). Its pathway is purine metabolism; AMP biosynthesis via de novo pathway; AMP from IMP: step 1/2. In terms of biological role, plays an important role in the de novo pathway and in the salvage pathway of purine nucleotide biosynthesis. Catalyzes the first committed step in the biosynthesis of AMP from IMP. This Blastomyces gilchristii (strain SLH14081) (Blastomyces dermatitidis) protein is Adenylosuccinate synthetase.